The chain runs to 203 residues: Orotate phosphoribosyltransferase (203 aa).

5-phospho-alpha-D-ribose 1-diphosphate-binding positions include Arg-94, Lys-95, Lys-98, His-100, and 119–127 (DDVATTGGS). Residues Thr-123 and Arg-151 each coordinate orotate.

It belongs to the purine/pyrimidine phosphoribosyltransferase family. PyrE subfamily. In terms of assembly, homodimer. Mg(2+) serves as cofactor.

The catalysed reaction is orotidine 5'-phosphate + diphosphate = orotate + 5-phospho-alpha-D-ribose 1-diphosphate. The protein operates within pyrimidine metabolism; UMP biosynthesis via de novo pathway; UMP from orotate: step 1/2. Its function is as follows. Catalyzes the transfer of a ribosyl phosphate group from 5-phosphoribose 1-diphosphate to orotate, leading to the formation of orotidine monophosphate (OMP). This Staphylothermus marinus (strain ATCC 43588 / DSM 3639 / JCM 9404 / F1) protein is Orotate phosphoribosyltransferase.